Here is a 361-residue protein sequence, read N- to C-terminus: Large ribosomal subunit protein uL3 (361 aa).

The segment covering 1-14 (MGRGGRRNPGRPRR) has biased composition (basic residues). Disordered regions lie at residues 1–33 (MGRG…PRIR) and 337–361 (TSQQ…PASA).

Belongs to the universal ribosomal protein uL3 family. Part of the 50S ribosomal subunit. Forms a cluster with proteins L14 and L24e.

In terms of biological role, one of the primary rRNA binding proteins, it binds directly near the 3'-end of the 23S rRNA, where it nucleates assembly of the 50S subunit. This Methanopyrus kandleri (strain AV19 / DSM 6324 / JCM 9639 / NBRC 100938) protein is Large ribosomal subunit protein uL3.